Reading from the N-terminus, the 548-residue chain is ADP,ATP carrier protein 1 (548 aa).

2 helical membrane-spanning segments follow: residues 39 to 59 and 75 to 95; these read RPVF…YSVS and SIPY…VFSI. An N-linked (GlcNAc...) asparagine glycan is attached at N101. 8 helical membrane passes run 107-127, 149-169, 171-191, 204-224, 239-259, 302-322, 350-370, and 374-394; these read VFSI…TVLM, MVFM…SWTS, LMYL…FFAL, FIPL…FSMK, LFFR…IYLI, LVLA…MVEA, IQLA…PALI, and GFLY…ASVF. N-linked (GlcNAc...) asparagine glycans are attached at residues N400 and N406. Residues 410–430 traverse the membrane as a helical segment; sequence LGFVSIGENLWLEQLLGAIIV. N-linked (GlcNAc...) asparagine glycosylation is present at N488. The chain crosses the membrane as a helical span at residues 494-514; sequence KAAISSLTIVTVITACWGFAV.

Belongs to the ADP/ATP translocase tlc family.

Its subcellular location is the cell membrane. ATP transporter involved in the uptake of ATP from the host cell cytoplasm. Provides the microsporidian cell with host ATP in exchange for ADP. This is an obligate exchange system. This energy acquiring activity is an important component of microsporidian parasitism. This is ADP,ATP carrier protein 1 (ANC1) from Paranosema grylli (Microsporidian parasite).